We begin with the raw amino-acid sequence, 331 residues long: Phosphate acyltransferase (331 aa).

The protein belongs to the PlsX family. As to quaternary structure, homodimer. Probably interacts with PlsY.

It is found in the cytoplasm. It catalyses the reaction a fatty acyl-[ACP] + phosphate = an acyl phosphate + holo-[ACP]. It participates in lipid metabolism; phospholipid metabolism. Functionally, catalyzes the reversible formation of acyl-phosphate (acyl-PO(4)) from acyl-[acyl-carrier-protein] (acyl-ACP). This enzyme utilizes acyl-ACP as fatty acyl donor, but not acyl-CoA. This is Phosphate acyltransferase from Exiguobacterium sibiricum (strain DSM 17290 / CCUG 55495 / CIP 109462 / JCM 13490 / 255-15).